Consider the following 1316-residue polypeptide: Tetratricopeptide repeat protein 21B (1316 aa).

TPR repeat units follow at residues 108 to 141 (EKALYHAGLFLWHIGRHDKAREYIDRMIKISDGS), 145 to 178 (HVLKAWLDITRGKEPYTKKALKYFEEGLQDGNDT), 180 to 211 (ALLGKAQCLEMRQNYSGALETVNQIIVNFPSF), 285 to 323 (AQLFYNITLAFSRTCGRSQLILQKIQTLLERAFSLNPQQ), 324 to 357 (SEFATELGYQMILQGRVKEALKWYKTAMTLDETS), 492 to 525 (LQTVFLIAKVKYLSGDIEAAFNNLQHCLEHNPSY), 563 to 596 (PLYHLIKAQSQKKMGEIADAIKTLHMAMSLPGMK), 617 to 650 (LSIFLELIDVHRLNGEQHEATKVLQDAIHEFSGT), 722 to 755 (PRSFLLLGDAYMNILEPEEAIVAYEQALNQNPKD), 757 to 789 (TLASKMGKALIKTHNYSMAITYYEAALKTGQKN), 791 to 822 (LCYDLAELLLKLKWYDKAEKVLQHALAHEPVN), 831 to 864 (GRCQVLLAKVYSKMEKLGDAITALQQARELQARV), 884 to 917 (AEICAEIAKHSVAQRDYEKAIKFYREALVHCETD), 919 to 951 (KIMLELARLYLAQDDPDSCLRQCALLLQSDQDN), 952 to 985 (EAATMMMADLMFRKQDYEQAVFHLQQLLERKPDN), 1023 to 1056 (PGFQYCKGLYLWYTGEPNDALRHFNKARKDRDWG), 1197 to 1230 (EKSWLLLADIYIQSAKYDMAEDLLKRCLRHNRSC), 1232 to 1264 (KAYEYMGYIMEKEQAYTDAALNYEMAWKYSNRT), and 1266 to 1299 (PAVGYKLAFNYLKAKRYVDSIDICHQVLEAHPTY).

Belongs to the TTC21 family. Component of the IFT complex A (IFT-A) complex. IFT-A complex is divided into a core subcomplex composed of IFT122:IFT140:WDR19 which is associated with TULP3 and a peripheral subcomplex composed of IFT43:WDR35:TTC21B. Interacts directy with WDR35 and TTC21B. Interacts with TTC25.

The protein resides in the cytoplasm. It is found in the cytoskeleton. It localises to the cilium axoneme. Functionally, component of the IFT complex A (IFT-A), a complex required for retrograde ciliary transport and entry into cilia of G protein-coupled receptors (GPCRs). Essential for retrograde trafficking of IFT-1, IFT-B and GPCRs. Negatively modulates the SHH signal transduction. This Homo sapiens (Human) protein is Tetratricopeptide repeat protein 21B.